A 506-amino-acid polypeptide reads, in one-letter code: MPTIRPDEISTIIKQQIEQYNQEMQISNVGTVLQVGDGIARIYGLEKVMASELLEFEDGTVGIALNLEEDNVGAVLIGSGRNIQEGSIVKATGRIASIPVGEALLGRVVDPLCNPIDGKGPIHCTETRLIESPAPGIVDRRSVYEPLQTGITAIDALIPIGRGQRELIIGDRQTGKTTLAVDTILNQKGQDVICIYVAIGQKQSNIAQVVNILSERGAMDYSIVVAAGADSPAPLQWLAPYCGATIAEYFMYQGKHTLVVYDDLSKQAVAYRQMSLLLRRPPGREAYPGDVFYLHSRLLERAAKLNSRLGEGSMTALPIVETQANDVSAYIPTNVISITDGQIFLESDLFNAGIRPAINVGISVSRVGSAAQTKAMKKVAGSIKVELAQYRDLEAFAQFASDLDEATQKQLARGQRLQEILKQPQYSPLSLDQQVAIIYAGTRGYLDDIPVEKVSSFKQGLLSYLGTAHPKYGEIVLSTKQLTDEAEEILKTAIAEFKQSFLAKAA.

ATP is bound at residue 170 to 177; it reads GDRQTGKT.

Belongs to the ATPase alpha/beta chains family. As to quaternary structure, F-type ATPases have 2 components, CF(1) - the catalytic core - and CF(0) - the membrane proton channel. CF(1) has five subunits: alpha(3), beta(3), gamma(1), delta(1), epsilon(1). CF(0) has four main subunits: a(1), b(1), b'(1) and c(9-12).

The protein localises to the cellular thylakoid membrane. It carries out the reaction ATP + H2O + 4 H(+)(in) = ADP + phosphate + 5 H(+)(out). Functionally, produces ATP from ADP in the presence of a proton gradient across the membrane. The alpha chain is a regulatory subunit. This Synechococcus sp. (strain JA-3-3Ab) (Cyanobacteria bacterium Yellowstone A-Prime) protein is ATP synthase subunit alpha.